Here is a 382-residue protein sequence, read N- to C-terminus: Glucose-1-phosphate adenylyltransferase (382 aa).

Alpha-D-glucose 1-phosphate-binding positions include Y100, G165, 180–181 (EK), and S191.

This sequence belongs to the bacterial/plant glucose-1-phosphate adenylyltransferase family. Homotetramer.

The catalysed reaction is alpha-D-glucose 1-phosphate + ATP + H(+) = ADP-alpha-D-glucose + diphosphate. The protein operates within glycan biosynthesis; glycogen biosynthesis. Functionally, involved in the biosynthesis of ADP-glucose, a building block required for the elongation reactions to produce glycogen. Catalyzes the reaction between ATP and alpha-D-glucose 1-phosphate (G1P) to produce pyrophosphate and ADP-Glc. The polypeptide is Glucose-1-phosphate adenylyltransferase (Clostridium novyi (strain NT)).